Reading from the N-terminus, the 108-residue chain is Large ribosomal subunit protein uL24 (108 aa).

This sequence belongs to the universal ribosomal protein uL24 family. As to quaternary structure, part of the 50S ribosomal subunit.

One of two assembly initiator proteins, it binds directly to the 5'-end of the 23S rRNA, where it nucleates assembly of the 50S subunit. Its function is as follows. One of the proteins that surrounds the polypeptide exit tunnel on the outside of the subunit. This chain is Large ribosomal subunit protein uL24, found in Pelobacter propionicus (strain DSM 2379 / NBRC 103807 / OttBd1).